We begin with the raw amino-acid sequence, 337 residues long: ATP-dependent 6-phosphofructokinase (337 aa).

Gly-11 contributes to the ATP binding site. Residue 21–25 participates in ADP binding; that stretch reads RAVVR. ATP contacts are provided by residues 72-73 and 102-105; these read RY and GDGS. A Mg(2+)-binding site is contributed by Asp-103. Residue 125-127 coordinates substrate; it reads TID. The active-site Proton acceptor is Asp-127. Arg-154 contacts ADP. Substrate is bound by residues Arg-162 and 169–171; that span reads MGR. ADP is bound by residues 185 to 187, Arg-212, and 214 to 216; these read GAD and KNH. Substrate contacts are provided by residues Glu-223, Arg-245, and 251 to 254; that span reads HILR.

The protein belongs to the phosphofructokinase type A (PFKA) family. ATP-dependent PFK group I subfamily. Prokaryotic clade 'B1' sub-subfamily. In terms of assembly, homotetramer. The cofactor is Mg(2+).

It localises to the cytoplasm. It catalyses the reaction beta-D-fructose 6-phosphate + ATP = beta-D-fructose 1,6-bisphosphate + ADP + H(+). It participates in carbohydrate degradation; glycolysis; D-glyceraldehyde 3-phosphate and glycerone phosphate from D-glucose: step 3/4. With respect to regulation, allosterically activated by ADP and other diphosphonucleosides, and allosterically inhibited by phosphoenolpyruvate. Catalyzes the phosphorylation of D-fructose 6-phosphate to fructose 1,6-bisphosphate by ATP, the first committing step of glycolysis. This chain is ATP-dependent 6-phosphofructokinase, found in Streptococcus equi subsp. zooepidemicus (strain H70).